A 593-amino-acid polypeptide reads, in one-letter code: Aspartate--tRNA ligase (593 aa).

E181 contributes to the L-aspartate binding site. Residues Q205–K208 are aspartate. An L-aspartate-binding site is contributed by R227. ATP-binding positions include R227–E229 and Q236. H455 is a binding site for L-aspartate. E489 is a binding site for ATP. Residue R496 coordinates L-aspartate. G541–R544 contributes to the ATP binding site.

It belongs to the class-II aminoacyl-tRNA synthetase family. Type 1 subfamily. As to quaternary structure, homodimer.

It is found in the cytoplasm. The catalysed reaction is tRNA(Asp) + L-aspartate + ATP = L-aspartyl-tRNA(Asp) + AMP + diphosphate. Functionally, catalyzes the attachment of L-aspartate to tRNA(Asp) in a two-step reaction: L-aspartate is first activated by ATP to form Asp-AMP and then transferred to the acceptor end of tRNA(Asp). The chain is Aspartate--tRNA ligase from Ruminiclostridium cellulolyticum (strain ATCC 35319 / DSM 5812 / JCM 6584 / H10) (Clostridium cellulolyticum).